The chain runs to 330 residues: Ribosomal RNA small subunit methyltransferase C (330 aa).

It belongs to the methyltransferase superfamily. RsmC family. As to quaternary structure, monomer.

The protein resides in the cytoplasm. The catalysed reaction is guanosine(1207) in 16S rRNA + S-adenosyl-L-methionine = N(2)-methylguanosine(1207) in 16S rRNA + S-adenosyl-L-homocysteine + H(+). Its function is as follows. Specifically methylates the guanine in position 1207 of 16S rRNA in the 30S particle. The sequence is that of Ribosomal RNA small subunit methyltransferase C from Haemophilus influenzae (strain PittGG).